The primary structure comprises 226 residues: ATP-dependent dethiobiotin synthetase BioD (226 aa).

12–17 serves as a coordination point for ATP; the sequence is GIGKTV. Thr-16 provides a ligand contact to Mg(2+). Residue Lys-37 is part of the active site. Thr-41 is a substrate binding site. Residues Asp-49, 108–111, and 197–199 each bind ATP; these read EGAG and PAG. Residues Asp-49 and Glu-108 each coordinate Mg(2+).

The protein belongs to the dethiobiotin synthetase family. Homodimer. Mg(2+) is required as a cofactor.

It is found in the cytoplasm. The enzyme catalyses (7R,8S)-7,8-diammoniononanoate + CO2 + ATP = (4R,5S)-dethiobiotin + ADP + phosphate + 3 H(+). It participates in cofactor biosynthesis; biotin biosynthesis; biotin from 7,8-diaminononanoate: step 1/2. Catalyzes a mechanistically unusual reaction, the ATP-dependent insertion of CO2 between the N7 and N8 nitrogen atoms of 7,8-diaminopelargonic acid (DAPA, also called 7,8-diammoniononanoate) to form a ureido ring. The chain is ATP-dependent dethiobiotin synthetase BioD from Mycolicibacterium vanbaalenii (strain DSM 7251 / JCM 13017 / BCRC 16820 / KCTC 9966 / NRRL B-24157 / PYR-1) (Mycobacterium vanbaalenii).